A 198-amino-acid polypeptide reads, in one-letter code: MICOS complex subunit MIC26 (198 aa).

The signal sequence occupies residues 1–25 (MFKVIHRYVGPASLSLLTFKVYASS). Residues 108-128 (PGFFPRLGVIGFAGVVGLVLA) traverse the membrane as a helical segment. A glycan (O-linked (Xyl...) (chondroitin sulfate) serine) is linked at Ser-162.

This sequence belongs to the apolipoprotein O/MICOS complex subunit Mic27 family. In terms of assembly, component of the mitochondrial contact site and cristae organizing system (MICOS) complex, composed of at least MICOS10/MIC10, CHCHD3/MIC19, CHCHD6/MIC25, APOOL/MIC27, IMMT/MIC60, APOO/MIC23/MIC26 and MICOS13/MIC13. This complex was also known under the names MINOS or MitOS complex. The MICOS complex associates with mitochondrial outer membrane proteins SAMM50, MTX1 and MTX2 (together described as components of the mitochondrial outer membrane sorting assembly machinery (SAM) complex) and DNAJC11, mitochondrial inner membrane protein TMEM11 and with HSPA9. The MICOS and SAM complexes together with DNAJC11 are part of a large protein complex spanning both membranes termed the mitochondrial intermembrane space bridging (MIB) complex. Interacts with IMMT/MIC60. Interacts with MICOS10/MIC10 and APOOL/MIC27. O-glycosylation; glycosaminoglycan of chondroitin-sulfate type.

The protein resides in the mitochondrion inner membrane. Its subcellular location is the secreted. It localises to the mitochondrion. The protein localises to the endoplasmic reticulum membrane. It is found in the golgi apparatus membrane. In terms of biological role, component of the MICOS complex, a large protein complex of the mitochondrial inner membrane that plays crucial roles in the maintenance of crista junctions, inner membrane architecture, and formation of contact sites to the outer membrane. Plays a crucial role in crista junction formation and mitochondrial function. Can induce cardiac lipotoxicity by enhancing mitochondrial respiration and fatty acid metabolism in cardiac myoblasts. Promotes cholesterol efflux from macrophage cells. Detected in HDL, LDL and VLDL. Secreted by a microsomal triglyceride transfer protein (MTTP)-dependent mechanism, probably as a VLDL-associated protein that is subsequently transferred to HDL. The chain is MICOS complex subunit MIC26 (APOO) from Bos taurus (Bovine).